The primary structure comprises 149 residues: Calmodulin-B (149 aa).

Alanine 2 is modified (N-acetylalanine). EF-hand domains are found at residues 8–43 (EQIA…LGQN), 44–79 (PTEA…KMKE), 81–116 (DSEE…LGEK), and 117–149 (LTDE…MTCK). The Ca(2+) site is built by aspartate 21, aspartate 23, aspartate 25, threonine 27, glutamate 32, aspartate 57, aspartate 59, asparagine 61, threonine 63, glutamate 68, aspartate 94, aspartate 96, asparagine 98, and glutamate 105. Lysine 116 is subject to N6,N6,N6-trimethyllysine. Positions 130, 132, 134, 136, and 141 each coordinate Ca(2+).

This sequence belongs to the calmodulin family.

In terms of biological role, calmodulin mediates the control of a large number of enzymes, ion channels and other proteins by Ca(2+). Among the enzymes to be stimulated by the calmodulin-Ca(2+) complex are a number of protein kinases and phosphatases. In Halocynthia roretzi (Sea squirt), this protein is Calmodulin-B.